The sequence spans 987 residues: SNF2 domain-containing protein ENL1 (987 aa).

Disordered stretches follow at residues 1-172 (MASP…AYGG) and 224-245 (FGDY…ENHA). Composition is skewed to pro residues over residues 18 to 27 (TPPAPTPLAA) and 51 to 71 (NPNP…PQEP). Residues 99-110 (DSIRDILDDLTT) are compositionally biased toward basic and acidic residues. The segment covering 141–156 (PSQSQLNDGTKPSSSF) has biased composition (polar residues). Positions 226 to 237 (DYDDEDDIDQDA) are enriched in acidic residues. A Helicase ATP-binding domain is found at 292–466 (WVLHCRGTGG…WALFYFCCPE (175 aa)). An ATP-binding site is contributed by 305-312 (DDMGLGKT). Residues 417 to 420 (DEGH) carry the DEAH box motif. The Helicase C-terminal domain occupies 645–801 (SLLQNLVSEG…TRYFSKRDIQ (157 aa)).

It belongs to the SNF2/RAD54 helicase family. In terms of tissue distribution, expressed in ovaries, roots, shoots and leaves.

It localises to the cytoplasm. It is found in the chromosome. DNA helicase that acts as an essential component of the spindle assembly checkpoint. Plays an indispensable role in the development of seed endosperm. Is required to secure sister chromosome separation during endosperm syncytial mitosis, which involves extremely rapid free nuclear cycles. The polypeptide is SNF2 domain-containing protein ENL1 (Oryza sativa subsp. japonica (Rice)).